A 498-amino-acid polypeptide reads, in one-letter code: Minor fimbrium subunit Mfa1 (498 aa).

The signal sequence occupies residues 1 to 19 (MKLNKMFLVGALLSLGFAS). Cysteine 20 carries N-palmitoyl cysteine lipidation. Cysteine 20 carries S-diacylglycerol cysteine lipidation. Positions 20–50 (CSKEGNGPAPDSSSTADTHMSVSMSLPQHNR) are excised as a propeptide. The segment at 436–476 (SGNPFVPTDPDPNNPDTPDNPDTPDPEDPDTPNPEEPLPVQ) is disordered.

The protein belongs to the bacteroidetes fimbrillin superfamily. FimA/Mfa1 family. In terms of assembly, structural component of the fimbrial stalk. Minor fimbriae are composed of a structural subunit, most often Mfa1, and the accessory subunits Mfa3, Mfa4 and Mfa5. Mfa1 interacts with Mfa2; this anchors the fimbrium in the membrane. Fimbrium assembly occurs by linear, head-to-tail oligomerization of fimbrial subunits. This is mediated via insertion of a C-terminal beta-strand from one subunit into a groove in the N-terminal domain of the following subunit.

The protein localises to the fimbrium. It is found in the cell outer membrane. In terms of biological role, structural subunit of the minor fimbriae. These filamentous pili are attached to the cell surface; they mediate biofilm formation, adhesion onto host cells and onto other bacteria that are part of the oral microbiome. They play an important role in invasion of periodontal tissues and are recognized as major virulence factors. Mfa1 orthologs from different strains have highly divergent sequences, and this correlates with pathogenicity. The sequence is that of Minor fimbrium subunit Mfa1 from Porphyromonas gingivalis (Bacteroides gingivalis).